The following is a 178-amino-acid chain: Phosphopantetheine adenylyltransferase (178 aa).

Serine 8 contacts substrate. Residues 8–9 (SF) and histidine 16 each bind ATP. Substrate-binding residues include lysine 40, threonine 72, and arginine 86. Residues 87–89 (GLR), glutamate 97, and 122–128 (YSFLSSS) contribute to the ATP site.

This sequence belongs to the bacterial CoaD family. As to quaternary structure, homohexamer. Requires Mg(2+) as cofactor.

It localises to the cytoplasm. The enzyme catalyses (R)-4'-phosphopantetheine + ATP + H(+) = 3'-dephospho-CoA + diphosphate. The protein operates within cofactor biosynthesis; coenzyme A biosynthesis; CoA from (R)-pantothenate: step 4/5. Functionally, reversibly transfers an adenylyl group from ATP to 4'-phosphopantetheine, yielding dephospho-CoA (dPCoA) and pyrophosphate. This Picosynechococcus sp. (strain ATCC 27264 / PCC 7002 / PR-6) (Agmenellum quadruplicatum) protein is Phosphopantetheine adenylyltransferase.